Here is a 243-residue protein sequence, read N- to C-terminus: UPF0688 protein C1orf174 (243 aa).

Disordered stretches follow at residues 78–100 (NDSA…AEGS) and 132–243 (LAKT…DAEM). Positions 145-157 (SAGSGAEESNSSS) are enriched in low complexity. Serine 148 and serine 189 each carry phosphoserine. Positions 233-243 (DDDDDDDDAEM) are enriched in acidic residues.

It belongs to the UPF0688 family.

It localises to the nucleus. In Homo sapiens (Human), this protein is UPF0688 protein C1orf174 (C1orf174).